The following is a 280-amino-acid chain: Release factor glutamine methyltransferase (280 aa).

Residues 120 to 124 (GTGSG), Asp143, and Asn186 each bind S-adenosyl-L-methionine. 186–189 (NPPY) provides a ligand contact to substrate.

The protein belongs to the protein N5-glutamine methyltransferase family. PrmC subfamily.

The enzyme catalyses L-glutaminyl-[peptide chain release factor] + S-adenosyl-L-methionine = N(5)-methyl-L-glutaminyl-[peptide chain release factor] + S-adenosyl-L-homocysteine + H(+). Functionally, methylates the class 1 translation termination release factors RF1/PrfA and RF2/PrfB on the glutamine residue of the universally conserved GGQ motif. The chain is Release factor glutamine methyltransferase from Koribacter versatilis (strain Ellin345).